The sequence spans 434 residues: Na(+)/H(+) antiporter NhaA 1 (434 aa).

11 helical membrane-spanning segments follow: residues 34 to 54 (GLLLIAAATVAIVWANTPWSA), 73 to 93 (LTLGAWAADGLLAIFFFVAGL), 111 to 131 (ALPVVAAMGGMAVPALVYVLW), 141 to 161 (GWAIPTATDIAFAVAILAVIS), 171 to 191 (FLLTLAVVDDLLAITIIALFY), 194 to 214 (ELHLGYLAAAAVPLLVFALLV), 233 to 253 (VLVHESGVHATVAGVLLGFAV), 278 to 298 (SAGLAVPVFAFFAAGVTVGGF), 313 to 333 (VVTGLVVGKTVGIAGSTWLLA), 346 to 366 (WVDVVGLAMLAGIGFTVSLLI), and 380 to 400 (HVKVGVLVGSLAATALATGVL).

It belongs to the NhaA Na(+)/H(+) (TC 2.A.33) antiporter family.

Its subcellular location is the cell membrane. It catalyses the reaction Na(+)(in) + 2 H(+)(out) = Na(+)(out) + 2 H(+)(in). Its function is as follows. Na(+)/H(+) antiporter that extrudes sodium in exchange for external protons. This is Na(+)/H(+) antiporter NhaA 1 from Nocardioides sp. (strain ATCC BAA-499 / JS614).